The sequence spans 428 residues: uncharacterized protein (428 aa).

12 consecutive transmembrane segments (helical) span residues 14 to 34 (LYDWANSAYSIVVTTAVFPLF), 55 to 75 (YTIAISTFILAMLGPILGTIA), 84 to 104 (FFGFFVSAGVASTAMLAFIPS), 107 to 127 (WLLLLLFYTVSAIGFSGANVF), 149 to 169 (FGLGYIGSTIPFIISIAVILL), 182 to 202 (ASQLSFFITAAWWGLFTIPMI), 238 to 258 (LFLFLLAYFFYIDGVGTIITM), 272 to 292 (SLLIILFVTQVVAAPFSIIYG), 302 to 322 (TMLYVGIVIYMIVCVYAYFME), 324 to 344 (TLDFWILAMLVATSQGGIQAL), 361 to 381 (FFGFYNIFGKFASIMGPLLIA), and 392 to 412 (TAVFSLIILFVIGIVILAFVP).

Belongs to the major facilitator superfamily.

The protein resides in the cell membrane. This is an uncharacterized protein from Bacillus subtilis (strain 168).